We begin with the raw amino-acid sequence, 221 residues long: MAKVDLFNIKGENIGTVELKEEVFAIEPNQDVMWRYIDMQLTNSRAGTASTKTRGEVSGGGRKPWIQKHTGRARQGSIRAPHWRHGGVAHGPKPRVYFKRLNKKMKRLALKSALSLRLKENNLVVVDDIKFEKPRTKDLREVLKNLGLENQKVLIVLPKKESEYENVKISGRNIPGVKVLIADNPGVDRVNIDGLNVYDILNHDKLVLLQGTVQKIEEVLG.

A disordered region spans residues Gly47 to Ser77.

This sequence belongs to the universal ribosomal protein uL4 family. As to quaternary structure, part of the 50S ribosomal subunit.

In terms of biological role, one of the primary rRNA binding proteins, this protein initially binds near the 5'-end of the 23S rRNA. It is important during the early stages of 50S assembly. It makes multiple contacts with different domains of the 23S rRNA in the assembled 50S subunit and ribosome. Forms part of the polypeptide exit tunnel. This is Large ribosomal subunit protein uL4 from Thermosipho melanesiensis (strain DSM 12029 / CIP 104789 / BI429).